The chain runs to 217 residues: RING-H2 finger protein ATL70 (217 aa).

Residues Ile61–Ile81 traverse the membrane as a helical segment. An RING-type; atypical zinc finger spans residues Cys147–Arg189.

Belongs to the RING-type zinc finger family. ATL subfamily.

It localises to the membrane. It catalyses the reaction S-ubiquitinyl-[E2 ubiquitin-conjugating enzyme]-L-cysteine + [acceptor protein]-L-lysine = [E2 ubiquitin-conjugating enzyme]-L-cysteine + N(6)-ubiquitinyl-[acceptor protein]-L-lysine.. Its pathway is protein modification; protein ubiquitination. This chain is RING-H2 finger protein ATL70 (ATL70), found in Arabidopsis thaliana (Mouse-ear cress).